Here is a 217-residue protein sequence, read N- to C-terminus: Histone H1C (217 aa).

Composition is skewed to low complexity over residues methionine 1–proline 11 and lysine 28–serine 45. 2 disordered regions span residues methionine 1–serine 45 and valine 123–lysine 217. Residues serine 40 to lysine 113 form the H15 domain. Basic residues-rich tracts occupy residues valine 123–lysine 151 and serine 159–lysine 217.

The protein belongs to the histone H1/H5 family.

It is found in the nucleus. The protein resides in the chromosome. Histones H1 are necessary for the condensation of nucleosome chains into higher-order structures. This Xenopus laevis (African clawed frog) protein is Histone H1C.